The following is a 200-amino-acid chain: Large ribosomal subunit protein uL4 (200 aa).

A disordered region spans residues 45 to 64; sequence QKTRAEVSGGGIKPWRQKGT.

Belongs to the universal ribosomal protein uL4 family. In terms of assembly, part of the 50S ribosomal subunit.

One of the primary rRNA binding proteins, this protein initially binds near the 5'-end of the 23S rRNA. It is important during the early stages of 50S assembly. It makes multiple contacts with different domains of the 23S rRNA in the assembled 50S subunit and ribosome. Its function is as follows. Forms part of the polypeptide exit tunnel. The sequence is that of Large ribosomal subunit protein uL4 from Psychrobacter cryohalolentis (strain ATCC BAA-1226 / DSM 17306 / VKM B-2378 / K5).